Consider the following 635-residue polypeptide: 1-deoxy-D-xylulose-5-phosphate synthase (635 aa).

Thiamine diphosphate is bound by residues His-78 and 119-121 (GHA). Residue Asp-150 participates in Mg(2+) binding. Residues 151–152 (GS), Asn-179, Phe-291, and Glu-376 contribute to the thiamine diphosphate site. Asn-179 serves as a coordination point for Mg(2+).

The protein belongs to the transketolase family. DXPS subfamily. Homodimer. It depends on Mg(2+) as a cofactor. Thiamine diphosphate is required as a cofactor.

The catalysed reaction is D-glyceraldehyde 3-phosphate + pyruvate + H(+) = 1-deoxy-D-xylulose 5-phosphate + CO2. Its pathway is metabolic intermediate biosynthesis; 1-deoxy-D-xylulose 5-phosphate biosynthesis; 1-deoxy-D-xylulose 5-phosphate from D-glyceraldehyde 3-phosphate and pyruvate: step 1/1. Functionally, catalyzes the acyloin condensation reaction between C atoms 2 and 3 of pyruvate and glyceraldehyde 3-phosphate to yield 1-deoxy-D-xylulose-5-phosphate (DXP). The sequence is that of 1-deoxy-D-xylulose-5-phosphate synthase from Chlorobaculum tepidum (strain ATCC 49652 / DSM 12025 / NBRC 103806 / TLS) (Chlorobium tepidum).